The chain runs to 471 residues: 3-isopropylmalate dehydratase large subunit (471 aa).

C349, C410, and C413 together coordinate [4Fe-4S] cluster.

Belongs to the aconitase/IPM isomerase family. LeuC type 1 subfamily. Heterodimer of LeuC and LeuD. Requires [4Fe-4S] cluster as cofactor.

It carries out the reaction (2R,3S)-3-isopropylmalate = (2S)-2-isopropylmalate. It participates in amino-acid biosynthesis; L-leucine biosynthesis; L-leucine from 3-methyl-2-oxobutanoate: step 2/4. Catalyzes the isomerization between 2-isopropylmalate and 3-isopropylmalate, via the formation of 2-isopropylmaleate. This Chromobacterium violaceum (strain ATCC 12472 / DSM 30191 / JCM 1249 / CCUG 213 / NBRC 12614 / NCIMB 9131 / NCTC 9757 / MK) protein is 3-isopropylmalate dehydratase large subunit.